Reading from the N-terminus, the 244-residue chain is uncharacterized protein (244 aa).

The region spanning 1-78 is the WGR domain; the sequence is MKKRFIYHDE…PKFNFMDRYY (78 aa).

This is an uncharacterized protein from Escherichia coli (strain K12).